A 652-amino-acid polypeptide reads, in one-letter code: Protein phosphatase Slingshot homolog 3 (652 aa).

Residues 1 to 16 are compositionally biased toward polar residues; it reads MALVTVSRSPPASGHS. A disordered region spans residues 1 to 31; that stretch reads MALVTVSRSPPASGHSTPVGPTDRVIRRRGR. Ala-2 bears the N-acetylalanine mark. 4 positions are modified to phosphoserine: Ser-9, Ser-37, Ser-85, and Ser-87. Residues 43 to 91 are disordered; the sequence is GAVLGLQDGGEGNDAAEADPEPMEKPSGEEQPAEDQTDNGQGSQSPWKQ. The segment covering 80–90 has biased composition (polar residues); that stretch reads DNGQGSQSPWK. The region spanning 266–321 is the DEK-C domain; sequence EQMEQAILAELWQVLDASDLDSVTSKEIRQALELRLGCPLQQYRDFIDNQMLLLMA. The region spanning 325-466 is the Tyrosine-protein phosphatase domain; it reads RASRIFPHLY…LQTYQGILTA (142 aa). Cys-410 functions as the Phosphocysteine intermediate in the catalytic mechanism. 3 disordered regions span residues 484 to 526, 540 to 580, and 610 to 652; these read EPLA…LGLR, LLEP…KGGQ, and RAFQ…EGKA. Low complexity predominate over residues 540-552; it reads LLEPSSEPESTTE. Residues 642-652 are compositionally biased toward basic and acidic residues; the sequence is SVDDSREEGKA.

The protein belongs to the protein-tyrosine phosphatase family. As to quaternary structure, does not bind to, or colocalize with, filamentous actin.

The protein localises to the cytoplasm. Its subcellular location is the cytoskeleton. It is found in the nucleus. The catalysed reaction is O-phospho-L-tyrosyl-[protein] + H2O = L-tyrosyl-[protein] + phosphate. It catalyses the reaction O-phospho-L-seryl-[protein] + H2O = L-seryl-[protein] + phosphate. The enzyme catalyses O-phospho-L-threonyl-[protein] + H2O = L-threonyl-[protein] + phosphate. Protein phosphatase which may play a role in the regulation of actin filament dynamics. Can dephosphorylate and activate the actin binding/depolymerizing factor cofilin, which subsequently binds to actin filaments and stimulates their disassembly. The polypeptide is Protein phosphatase Slingshot homolog 3 (Ssh3) (Rattus norvegicus (Rat)).